A 106-amino-acid polypeptide reads, in one-letter code: UPF0091 protein RC0354 (106 aa).

It belongs to the UPF0091 family.

This is UPF0091 protein RC0354 from Rickettsia conorii (strain ATCC VR-613 / Malish 7).